The chain runs to 427 residues: Nuclear distribution protein PAC1-2 (427 aa).

Residues 8 to 40 form the LisH domain; the sequence is QKDDLNKSIAEYLYAQDLTEIADSLCARLSLDY. Residues 58-82 are a coiled coil; the sequence is SVIRLQKKLIESENRYTALQEDIAA. WD repeat units follow at residues 106–147, 149–187, 194–233, 236–275, 278–336, 339–378, and 381–420; these read SHRA…RTLK, HTRE…NAGY, GHEH…CIRT, GHED…MKME, GHGH…ELRT, GHND…CMXV, and AHSH…SRIM.

Belongs to the WD repeat LIS1/nudF family. As to quaternary structure, self-associates. Interacts with NDL1 and dynein.

It localises to the cytoplasm. The protein localises to the cytoskeleton. It is found in the spindle pole. In terms of biological role, positively regulates the activity of the minus-end directed microtubule motor protein dynein. May enhance dynein-mediated microtubule sliding by targeting dynein to the microtubule plus end. Required for nuclear migration during vegetative growth as well as development. Required for retrograde early endosome (EE) transport from the hyphal tip. Required for localization of dynein to the mitotic spindle poles. Recruits additional proteins to the dynein complex at SPBs. This is Nuclear distribution protein PAC1-2 from Postia placenta (strain ATCC 44394 / Madison 698-R) (Brown rot fungus).